We begin with the raw amino-acid sequence, 766 residues long: BMP/retinoic acid-inducible neural-specific protein 3 (766 aa).

The N-terminal stretch at 1–33 (MIWRSRAGAELFSLMALWEWIALSLHCWVLAVA) is a signal peptide. The MACPF domain occupies 74-264 (RYKIYREFGR…FVQAALSYIA (191 aa)). N-linked (GlcNAc...) asparagine glycosylation is found at asparagine 168, asparagine 337, asparagine 456, asparagine 562, asparagine 609, and asparagine 641.

This sequence belongs to the BRINP family. Strongly expressed in oral keratinocytes compared to the weak expression in tongue squamous cell carcinoma (SCC). Expressed in endothelial and aortic smooth muscle cells. Overexpressed in gonadotropinomas compared to normal pituitarie tissues.

The protein localises to the secreted. It localises to the mitochondrion. In terms of biological role, inhibits neuronal cell proliferation by negative regulation of the cell cycle transition. Promotes pituitary gonadotrope cell proliferation, migration and invasion, when overexpressed. May play a role in cell pituitary tumor development. This Homo sapiens (Human) protein is BMP/retinoic acid-inducible neural-specific protein 3 (BRINP3).